A 158-amino-acid chain; its full sequence is Sec-independent protein translocase protein TatB (158 aa).

The chain crosses the membrane as a helical span at residues 2 to 22; the sequence is FDGIGFMELLLIGVLGLVVLG. The tract at residues 86-158 is disordered; sequence LKQAAQSVNR…DTSSNPKANG (73 aa). Composition is skewed to polar residues over residues 88–107, 113–136, and 143–158; these read QAAQ…SQGT, QIHS…QHLT, and EPSQ…KANG.

Belongs to the TatB family. In terms of assembly, the Tat system comprises two distinct complexes: a TatABC complex, containing multiple copies of TatA, TatB and TatC subunits, and a separate TatA complex, containing only TatA subunits. Substrates initially bind to the TatABC complex, which probably triggers association of the separate TatA complex to form the active translocon.

The protein localises to the cell inner membrane. Its function is as follows. Part of the twin-arginine translocation (Tat) system that transports large folded proteins containing a characteristic twin-arginine motif in their signal peptide across membranes. Together with TatC, TatB is part of a receptor directly interacting with Tat signal peptides. TatB may form an oligomeric binding site that transiently accommodates folded Tat precursor proteins before their translocation. The protein is Sec-independent protein translocase protein TatB of Shewanella putrefaciens (strain CN-32 / ATCC BAA-453).